A 338-amino-acid chain; its full sequence is Phenylalanine--tRNA ligase alpha subunit (338 aa).

Mg(2+) is bound at residue Glu-253.

This sequence belongs to the class-II aminoacyl-tRNA synthetase family. Phe-tRNA synthetase alpha subunit type 1 subfamily. Tetramer of two alpha and two beta subunits. The cofactor is Mg(2+).

It is found in the cytoplasm. The catalysed reaction is tRNA(Phe) + L-phenylalanine + ATP = L-phenylalanyl-tRNA(Phe) + AMP + diphosphate + H(+). The sequence is that of Phenylalanine--tRNA ligase alpha subunit from Geotalea uraniireducens (strain Rf4) (Geobacter uraniireducens).